The chain runs to 369 residues: Peptide chain release factor 2 (369 aa).

N5-methylglutamine is present on glutamine 252.

It belongs to the prokaryotic/mitochondrial release factor family. Methylated by PrmC. Methylation increases the termination efficiency of RF2.

It is found in the cytoplasm. Peptide chain release factor 2 directs the termination of translation in response to the peptide chain termination codons UGA and UAA. The polypeptide is Peptide chain release factor 2 (Staphylococcus aureus (strain MRSA252)).